A 124-amino-acid polypeptide reads, in one-letter code: Small ribosomal subunit protein uS12 (124 aa).

Positions 1–42 (MPTTQQLIRKGRKTEEETSDAPALEGSPQRRGVCTRVYTTTP) are disordered. Position 89 is a 3-methylthioaspartic acid (aspartate 89). The disordered stretch occupies residues 105–124 (AGVEERRQGRSKYGTKKPRE). Basic residues predominate over residues 113–124 (GRSKYGTKKPRE).

It belongs to the universal ribosomal protein uS12 family. Part of the 30S ribosomal subunit. Contacts proteins S8 and S17. May interact with IF1 in the 30S initiation complex.

Its function is as follows. With S4 and S5 plays an important role in translational accuracy. Functionally, interacts with and stabilizes bases of the 16S rRNA that are involved in tRNA selection in the A site and with the mRNA backbone. Located at the interface of the 30S and 50S subunits, it traverses the body of the 30S subunit contacting proteins on the other side and probably holding the rRNA structure together. The combined cluster of proteins S8, S12 and S17 appears to hold together the shoulder and platform of the 30S subunit. This Salinibacter ruber (strain DSM 13855 / M31) protein is Small ribosomal subunit protein uS12.